We begin with the raw amino-acid sequence, 1250 residues long: Immunoglobulin superfamily DCC subclass member 4 (1250 aa).

The first 24 residues, 1-24 (MARGDAGRGRGLLALTFCLLAARG), serve as a signal peptide directing secretion. Topologically, residues 25 to 957 (ELLLPQETTV…SDSLDMHSVT (933 aa)) are extracellular. Ig-like C2-type domains lie at 29–137 (PQET…TAVV), 143–229 (ADFS…ALLS), 242–330 (QDVV…AELR), and 335–421 (PAIT…ASLA). Cys57 and Cys121 are oxidised to a cystine. 3 N-linked (GlcNAc...) asparagine glycosylation sites follow: Asn90, Asn102, and Asn157. A disulfide bridge links Cys164 with Cys212. Asn252 is a glycosylation site (N-linked (GlcNAc...) asparagine). 2 disulfide bridges follow: Cys265-Cys312 and Cys356-Cys405. Fibronectin type-III domains lie at 431–525 (APTR…TLDD), 527–623 (PSAA…TPSM), 632–741 (APAE…APAP), 752–845 (PPAH…TLPD), and 850–945 (PPSD…TLQE). A glycan (N-linked (GlcNAc...) asparagine) is linked at Asn582. A helical transmembrane segment spans residues 958–978 (GIIVGVCLGLLCLLACMCAGL). Residues 979–1250 (RRSPHRESLP…LPRSPVSSSA (272 aa)) lie on the Cytoplasmic side of the membrane. At Thr995 the chain carries Phosphothreonine. 2 disordered regions span residues 1140 to 1175 (SASN…DPGQ) and 1215 to 1250 (PGEV…SSSA).

The protein belongs to the immunoglobulin superfamily. DCC family.

The protein resides in the cell membrane. This chain is Immunoglobulin superfamily DCC subclass member 4 (IGDCC4), found in Homo sapiens (Human).